A 199-amino-acid polypeptide reads, in one-letter code: Ribonuclease HII (199 aa).

Residues 10–199 form the RNase H type-2 domain; sequence HLVAGVDEVG…VKRALGLASN (190 aa). 3 residues coordinate a divalent metal cation: Asp-16, Glu-17, and Asp-108.

This sequence belongs to the RNase HII family. Mn(2+) serves as cofactor. Mg(2+) is required as a cofactor.

The protein resides in the cytoplasm. The enzyme catalyses Endonucleolytic cleavage to 5'-phosphomonoester.. Endonuclease that specifically degrades the RNA of RNA-DNA hybrids. This is Ribonuclease HII from Klebsiella pneumoniae (strain 342).